Consider the following 267-residue polypeptide: uncharacterized protein (267 aa).

In terms of domain architecture, ABC transporter spans 17–248; the sequence is LKVENLTKIF…PRDRTSIEFL (232 aa). 53 to 60 contacts ATP; it reads GPSGCGKT.

The protein belongs to the ABC transporter superfamily.

This is an uncharacterized protein from Methanocaldococcus jannaschii (strain ATCC 43067 / DSM 2661 / JAL-1 / JCM 10045 / NBRC 100440) (Methanococcus jannaschii).